We begin with the raw amino-acid sequence, 337 residues long: C5a anaphylatoxin chemotactic receptor 2 (337 aa).

Over 1–38 (MGNDSVSYEYGDYSDLSDRPVDCLDGACLAIDPLRVAP) the chain is Extracellular. N3 carries an N-linked (GlcNAc...) asparagine glycan. Residues 39 to 61 (LPLYAAIFLVGVPGNAMVAWVAG) traverse the membrane as a helical segment. At 62–72 (KVARRRVGATW) the chain is on the cytoplasmic side. A helical transmembrane segment spans residues 73–95 (LLHLAVADLLCCLSLPILAVPIA). Over 96 to 114 (RGGHWPYGAVGCRALPSII) the chain is Extracellular. C107 and C186 are disulfide-bonded. A helical membrane pass occupies residues 115 to 137 (LLTMYASVLLLAALSADLCFLAL). Residues 138–149 (GPAWWSTVQRAC) lie on the Cytoplasmic side of the membrane. A helical transmembrane segment spans residues 150–172 (GVQVACGAAWTLALLLTVPSAIY). Topologically, residues 173–202 (RRLHQEHFPARLQCVVDYGGSSSTENAVTA) are extracellular. A helical transmembrane segment spans residues 203–225 (IRFLFGFLGPLVAVASCHSALLC). Residues 226–237 (WAARRCRPLGTA) lie on the Cytoplasmic side of the membrane. Residues 238–260 (IVVGFFVCWAPYHLLGLVLTVAA) form a helical membrane-spanning segment. The Extracellular portion of the chain corresponds to 261-274 (PNSALLARALRAEP). The chain crosses the membrane as a helical span at residues 275 to 294 (LIVGLALAHSCLNPMLFLYF). Residues 295-337 (GRAQLRRSLPAACHWALRESQGQDESVDSKKSTSHDLVSEMEV) lie on the Cytoplasmic side of the membrane. Phosphoserine is present on S320.

It belongs to the G-protein coupled receptor 1 family. In terms of assembly, interacts with C3 (the anaphylatoxin peptide C3a and the adipogenic hormone ASP); the interaction occurs with higher affinity for ASP, enhancing the phosphorylation and activation of GPR77, recruitment of ARRB2 to the cell surface and endocytosis of GRP77. In terms of tissue distribution, frontal cortex, hippocampus, hypothalamus, pons and liver.

It is found in the cell membrane. Functionally, receptor for the chemotactic and inflammatory C3a, C4a and C5a anaphylatoxin peptides and also for their dearginated forms ASP/C3adesArg, C4adesArg and C5adesArg respectively. Couples weakly to G(i)-mediated signaling pathways. This is C5a anaphylatoxin chemotactic receptor 2 (C5AR2) from Homo sapiens (Human).